The sequence spans 312 residues: tRNA dimethylallyltransferase (312 aa).

Residue 10–17 (GPTASGKS) coordinates ATP. Position 12–17 (12–17 (TASGKS)) interacts with substrate. Positions 35–38 (DSKQ) are interaction with substrate tRNA.

The protein belongs to the IPP transferase family. Monomer. Mg(2+) is required as a cofactor.

It carries out the reaction adenosine(37) in tRNA + dimethylallyl diphosphate = N(6)-dimethylallyladenosine(37) in tRNA + diphosphate. Its function is as follows. Catalyzes the transfer of a dimethylallyl group onto the adenine at position 37 in tRNAs that read codons beginning with uridine, leading to the formation of N6-(dimethylallyl)adenosine (i(6)A). This Anaplasma phagocytophilum (strain HZ) protein is tRNA dimethylallyltransferase.